We begin with the raw amino-acid sequence, 400 residues long: Serine/threonine transporter SstT (400 aa).

Helical transmembrane passes span 14-34 (IIIAIILGIGVALLFPTVTPY), 48-68 (SVAPILAFVLVLSSIANFQVG), 76-96 (VLLLYVVGMLLAAFSAVIASL), 136-156 (AISEANFIGILAWAIGLGLAM), 177-197 (IIHKVIAFAPVGIFGLVAVTF), 211-231 (LLAVLLGTMLFVALVINPILV), 293-313 (LAGAAVTITVLTLATVHTLGI), and 334-354 (ASGVAGGSLLLIPVACSLFGI).

The protein belongs to the dicarboxylate/amino acid:cation symporter (DAACS) (TC 2.A.23) family.

The protein resides in the cell inner membrane. The enzyme catalyses L-serine(in) + Na(+)(in) = L-serine(out) + Na(+)(out). The catalysed reaction is L-threonine(in) + Na(+)(in) = L-threonine(out) + Na(+)(out). In terms of biological role, involved in the import of serine and threonine into the cell, with the concomitant import of sodium (symport system). This chain is Serine/threonine transporter SstT, found in Acinetobacter baumannii (strain SDF).